Reading from the N-terminus, the 79-residue chain is Sulfur carrier protein TusA (79 aa).

The Cysteine persulfide intermediate role is filled by cysteine 17.

The protein belongs to the sulfur carrier protein TusA family.

It is found in the cytoplasm. Its function is as follows. Sulfur carrier protein which probably makes part of a sulfur-relay system. The polypeptide is Sulfur carrier protein TusA (Idiomarina loihiensis (strain ATCC BAA-735 / DSM 15497 / L2-TR)).